The following is a 981-amino-acid chain: Serine/threonine-protein kinase D1044.8 (981 aa).

Residues 453–725 (YELLDQLGAG…MCGVRLLEYL (273 aa)) enclose the Protein kinase domain. ATP contacts are provided by residues 459–467 (LGAGAFGCV) and K488. D591 serves as the catalytic Proton acceptor. The span at 735-746 (TSDMTASQSSYN) shows a compositional bias: polar residues. Disordered regions lie at residues 735–802 (TSDM…PSSI) and 823–847 (IPSR…TELK). A compositionally biased stretch (low complexity) spans 752–762 (SPSSLNSSTSS). Residues 830–847 (QTCSTEHPARSSSSTELK) are compositionally biased toward polar residues.

It belongs to the protein kinase superfamily. NEK Ser/Thr protein kinase family. NIMA subfamily. It depends on Mg(2+) as a cofactor.

The enzyme catalyses L-seryl-[protein] + ATP = O-phospho-L-seryl-[protein] + ADP + H(+). It catalyses the reaction L-threonyl-[protein] + ATP = O-phospho-L-threonyl-[protein] + ADP + H(+). This chain is Serine/threonine-protein kinase D1044.8 (nekl-4), found in Caenorhabditis elegans.